The chain runs to 255 residues: Small ribosomal subunit protein uS2 (255 aa).

The interval 226-255 (QGVSNEEVAAEQNIDLDEKEKSEETEATEE) is disordered.

The protein belongs to the universal ribosomal protein uS2 family.

This chain is Small ribosomal subunit protein uS2, found in Staphylococcus aureus (strain Mu3 / ATCC 700698).